The sequence spans 363 residues: Peroxisomal (S)-2-hydroxyacid oxidase GLO4 (363 aa).

The region spanning 1-357 (MDQIVNVDEF…TRNHVRTENE (357 aa)) is the FMN hydroxy acid dehydrogenase domain. Residues 78–80 (PTA), Ser107, 128–130 (QIY), and Thr156 contribute to the FMN site. Residue Tyr130 participates in a 2-oxocarboxylate binding. An a 2-oxocarboxylate-binding site is contributed by Arg165. Residues Lys228 and Ser250 each coordinate FMN. The Proton acceptor role is filled by His252. Arg255 contributes to the a 2-oxocarboxylate binding site. FMN is bound by residues 283 to 287 (DGGVR) and 306 to 307 (GR). Residues 361-363 (SML) carry the Microbody targeting signal motif.

This sequence belongs to the FMN-dependent alpha-hydroxy acid dehydrogenase family. In terms of assembly, homotetramer. Requires FMN as cofactor.

The protein resides in the peroxisome. It carries out the reaction a (2S)-2-hydroxycarboxylate + O2 = a 2-oxocarboxylate + H2O2. It catalyses the reaction 2-hydroxydodecanoate + O2 = 2-oxododecanoate + H2O2. The catalysed reaction is 2-hydroxyhexanoate + O2 = 2-oxohexanoate + H2O2. The enzyme catalyses 2-hydroxyoctanoate + O2 = 2-oxooctanoate + H2O2. It carries out the reaction (S)-lactate + O2 = pyruvate + H2O2. It participates in lipid metabolism; fatty acid metabolism. Its function is as follows. Oxidase that catalyzes the oxidation of a broad range of 2-hydroxyacids to the corresponding 2-oxoacids, with a reduction of O2 to H2O2. Displays the highest activity with the long-chain fatty acid 2-hydroxydodecanoate and has intermediate activity with 2-hydroxyhexanoate, 2-hydroxyoctanote, and the short-chain hydroxyacid (S)-lactate (L-lactate). With much lower activity, it can also use glycolate, leucic acid, valic acid, and isoleucic acid as substrates in vitro. Cannot use 2-hydroxyhexadecanoate or D-lactate as substrates. May be involved in a general medium- and long-chain fatty acid catabolic pathway such as alpha-oxidation. The polypeptide is Peroxisomal (S)-2-hydroxyacid oxidase GLO4 (GLO4) (Arabidopsis thaliana (Mouse-ear cress)).